The primary structure comprises 686 residues: MTQSSTPAERHAWLTQKVAEHNRRYYEEDAPTIPDFEYDALVRELRELEARHPEFAAPTSPAQTVGGRPSTLFEKVRHPTPMTSLDNAFSDAELAHFDDKVARALNLPPGSRTFTYTCELKIDGLSINLYYVDGILQWAATRGDGEVGEKVTANIEGIPGIPTQLPGLQGELEVRGEVYMSKATFLAYNLKAEEEGRPLLKNPRNGAAGALRQKDPAETRRRGLEVILYALGKRDGVPVRTQWDILEWLRAQGFATSEYARRVTGSEAAAAYHAEMTAQRPQLPFDADGSVVKLDDLRLQEDAGYTSRAPKWAVAYKFPADVAQTVIEAITIQTGRTGKLTPVAELRPVLLEGTTVARATLHNEDFIRGLDLHVGDTVRVHKSGGIIPEVLGVVLEQRPEGSTPYAFPTHCPVCGHEAVRHEGAAGTFCTNPACPAKSTLRVRYFASRDVMDIKGLGERLVEQLVDAGLVRDPADLYALTAEQIEHLEMGETTTGGVRRVGRKNAEKLVAEIEASKTRELWRVFRSLGLPYVGEGTATRIARVYRSLEDIRQASVDDLARIPDVGRQVAEGIVQGLRDADMCAYLDRLTAAGVQPTPSVDVRVGEQLAGLTFVVTGTLSVPRDVIKLHLGQYGARVSGSVTKKTSYLIAGEDAGSKLEKATELKVPVLDEAGLQKLLAEKGAPPLP.

Residues 35-39 (DFEYD), 84-85 (SL), and E119 contribute to the NAD(+) site. The active-site N6-AMP-lysine intermediate is K121. 4 residues coordinate NAD(+): R142, E177, K293, and K317. Zn(2+) is bound by residues C411, C414, C429, and C434. In terms of domain architecture, BRCT spans 602 to 686 (RVGEQLAGLT…LAEKGAPPLP (85 aa)).

The protein belongs to the NAD-dependent DNA ligase family. LigA subfamily. The cofactor is Mg(2+). It depends on Mn(2+) as a cofactor.

The catalysed reaction is NAD(+) + (deoxyribonucleotide)n-3'-hydroxyl + 5'-phospho-(deoxyribonucleotide)m = (deoxyribonucleotide)n+m + AMP + beta-nicotinamide D-nucleotide.. In terms of biological role, DNA ligase that catalyzes the formation of phosphodiester linkages between 5'-phosphoryl and 3'-hydroxyl groups in double-stranded DNA using NAD as a coenzyme and as the energy source for the reaction. It is essential for DNA replication and repair of damaged DNA. The chain is DNA ligase 1 from Deinococcus deserti (strain DSM 17065 / CIP 109153 / LMG 22923 / VCD115).